A 238-amino-acid chain; its full sequence is Ribonuclease PH (238 aa).

Phosphate contacts are provided by residues Arg86 and 124-126 (GTR).

The protein belongs to the RNase PH family. Homohexameric ring arranged as a trimer of dimers.

It carries out the reaction tRNA(n+1) + phosphate = tRNA(n) + a ribonucleoside 5'-diphosphate. Phosphorolytic 3'-5' exoribonuclease that plays an important role in tRNA 3'-end maturation. Removes nucleotide residues following the 3'-CCA terminus of tRNAs; can also add nucleotides to the ends of RNA molecules by using nucleoside diphosphates as substrates, but this may not be physiologically important. Probably plays a role in initiation of 16S rRNA degradation (leading to ribosome degradation) during starvation. The chain is Ribonuclease PH from Haemophilus influenzae (strain PittGG).